The chain runs to 283 residues: Phytanoyl-CoA dioxygenase (283 aa).

Residues lysine 99, methionine 138, 153-155 (HQD), and tryptophan 170 each bind 2-oxoglutarate. Positions 153 and 155 each coordinate Fe cation. Histidine 238 provides a ligand contact to Fe cation. 2-oxoglutarate contacts are provided by serine 240 and arginine 249.

It belongs to the PhyH family. Fe cation serves as cofactor. The cofactor is L-ascorbate.

It carries out the reaction phytanoyl-CoA + 2-oxoglutarate + O2 = 2-hydroxyphytanoyl-CoA + succinate + CO2. Its pathway is lipid metabolism; fatty acid metabolism. In terms of biological role, converts phytanoyl-CoA to 2-hydroxyphytanoyl-CoA. This chain is Phytanoyl-CoA dioxygenase, found in Arabidopsis thaliana (Mouse-ear cress).